The primary structure comprises 256 residues: Imidazole glycerol phosphate synthase subunit HisF (256 aa).

Residues D13 and D132 contribute to the active site.

The protein belongs to the HisA/HisF family. As to quaternary structure, heterodimer of HisH and HisF.

The protein resides in the cytoplasm. It catalyses the reaction 5-[(5-phospho-1-deoxy-D-ribulos-1-ylimino)methylamino]-1-(5-phospho-beta-D-ribosyl)imidazole-4-carboxamide + L-glutamine = D-erythro-1-(imidazol-4-yl)glycerol 3-phosphate + 5-amino-1-(5-phospho-beta-D-ribosyl)imidazole-4-carboxamide + L-glutamate + H(+). It participates in amino-acid biosynthesis; L-histidine biosynthesis; L-histidine from 5-phospho-alpha-D-ribose 1-diphosphate: step 5/9. Functionally, IGPS catalyzes the conversion of PRFAR and glutamine to IGP, AICAR and glutamate. The HisF subunit catalyzes the cyclization activity that produces IGP and AICAR from PRFAR using the ammonia provided by the HisH subunit. The polypeptide is Imidazole glycerol phosphate synthase subunit HisF (Leptospira borgpetersenii serovar Hardjo-bovis (strain JB197)).